Reading from the N-terminus, the 524-residue chain is Putative cysteine ligase BshC (524 aa).

Positions 437–457 (AQALDRSARKINYQIEKMERK) form a coiled coil.

It belongs to the BshC family.

This Solibacter usitatus (strain Ellin6076) protein is Putative cysteine ligase BshC.